The primary structure comprises 218 residues: Large ribosomal subunit protein bL25 (218 aa).

The interval 187–218 (SATAAVEEAKEDGAPEESAQGQGAAEAQETGK) is disordered. The span at 202-218 (EESAQGQGAAEAQETGK) shows a compositional bias: low complexity.

It belongs to the bacterial ribosomal protein bL25 family. CTC subfamily. Part of the 50S ribosomal subunit; part of the 5S rRNA/L5/L18/L25 subcomplex. Contacts the 5S rRNA. Binds to the 5S rRNA independently of L5 and L18.

Its function is as follows. This is one of the proteins that binds to the 5S RNA in the ribosome where it forms part of the central protuberance. The protein is Large ribosomal subunit protein bL25 of Anaplasma marginale (strain Florida).